A 277-amino-acid polypeptide reads, in one-letter code: Large ribosomal subunit protein uL2 (277 aa).

Residues 219-277 (TVRGSVMNPNDHPHGGGEGKAPVGRKAPSTPWGKPALGLKTRNKKAKSDKLIVRRRNEK) form a disordered region. Positions 264 to 277 (AKSDKLIVRRRNEK) are enriched in basic and acidic residues.

It belongs to the universal ribosomal protein uL2 family. Part of the 50S ribosomal subunit. Forms a bridge to the 30S subunit in the 70S ribosome.

Its function is as follows. One of the primary rRNA binding proteins. Required for association of the 30S and 50S subunits to form the 70S ribosome, for tRNA binding and peptide bond formation. It has been suggested to have peptidyltransferase activity; this is somewhat controversial. Makes several contacts with the 16S rRNA in the 70S ribosome. This is Large ribosomal subunit protein uL2 from Streptococcus pyogenes serotype M1.